We begin with the raw amino-acid sequence, 501 residues long: MEFKVNSECSEKQSSDCIVIGIFESGEFSPSAEKVNKISHGYLKGLPQNADLQGKAEQALLLHHVPHVAAERVLLIGCGKEEELDERRYKKLIKKMVNTLKETGAKNVFCYLPELKVKGKDIDWKIRSAIEVIQDALYCFDHYKSTKTLHALNQITFIVTATQTKAAQTAIQEGIALAVGINEAKNLANTPPNICNPAYLNASARKWAEKFKNVRVSVVNEDEMKKLGMNAYLAVGQGSKNESLMSIIEYKSGKIPAGTKPIVLVGKGMTFDSGGISIKPSQNMDEMKYDMCGAATVFGVMNVVAELNLPLYVIGVLAGAENMPGGNAYRPGDILTTLSGQTVEVLNTDAEGRLVLCDALTYVERFDPELVIDIATLTGACVVALGHHMSGLMSNHAPLAEDLLHASEQSGDLAWRLPLGEEYQEQLDSNFADMANIGGRTAGAITAGCFLSRFTHQYHWAHLDIAGTAWRTGKEKGATGRPVALLSQFLLNKALAQKQGA.

Residues Lys267 and Asp272 each coordinate Mn(2+). The active site involves Lys279. Positions 290, 349, and 351 each coordinate Mn(2+). Arg353 is an active-site residue.

It belongs to the peptidase M17 family. It depends on Mn(2+) as a cofactor.

The protein localises to the cytoplasm. The enzyme catalyses Release of an N-terminal amino acid, Xaa-|-Yaa-, in which Xaa is preferably Leu, but may be other amino acids including Pro although not Arg or Lys, and Yaa may be Pro. Amino acid amides and methyl esters are also readily hydrolyzed, but rates on arylamides are exceedingly low.. The catalysed reaction is Release of an N-terminal amino acid, preferentially leucine, but not glutamic or aspartic acids.. Functionally, presumably involved in the processing and regular turnover of intracellular proteins. Catalyzes the removal of unsubstituted N-terminal amino acids from various peptides. This chain is Probable cytosol aminopeptidase, found in Hamiltonella defensa subsp. Acyrthosiphon pisum (strain 5AT).